A 215-amino-acid chain; its full sequence is UPF0502 protein YceH (215 aa).

N6-acetyllysine is present on lysine 80.

This sequence belongs to the UPF0502 family.

The chain is UPF0502 protein YceH from Escherichia coli O81 (strain ED1a).